The sequence spans 175 residues: Nucleoside triphosphate/diphosphate phosphatase (175 aa).

Arg-23 functions as the Proton donor in the catalytic mechanism. Asn-87, Asp-103, Asp-105, Asp-107, Asp-120, and Glu-123 together coordinate Mg(2+).

This sequence belongs to the Ntdp family. The cofactor is Mg(2+).

It carries out the reaction a ribonucleoside 5'-triphosphate + H2O = a ribonucleoside 5'-diphosphate + phosphate + H(+). It catalyses the reaction a ribonucleoside 5'-diphosphate + H2O = a ribonucleoside 5'-phosphate + phosphate + H(+). Functionally, has nucleoside phosphatase activity towards nucleoside triphosphates and nucleoside diphosphates. In Listeria monocytogenes serotype 4b (strain CLIP80459), this protein is Nucleoside triphosphate/diphosphate phosphatase.